The chain runs to 602 residues: UvrABC system protein C (602 aa).

A GIY-YIG domain is found at 17–94 (TTSGCYKMYS…IKEYKPDYNI (78 aa)). Residues 199 to 234 (SKLLDETEIKMKEAIKKEDFEAAIKLKETKRSLIEI) form the UVR domain.

Belongs to the UvrC family. As to quaternary structure, interacts with UvrB in an incision complex.

The protein resides in the cytoplasm. Functionally, the UvrABC repair system catalyzes the recognition and processing of DNA lesions. UvrC both incises the 5' and 3' sides of the lesion. The N-terminal half is responsible for the 3' incision and the C-terminal half is responsible for the 5' incision. This chain is UvrABC system protein C, found in Borrelia hermsii (strain HS1 / DAH).